The chain runs to 292 residues: Beta-lactamase-like protein 2 homolog (292 aa).

Zn(2+)-binding residues include histidine 76, histidine 78, aspartate 80, histidine 81, histidine 145, aspartate 163, and histidine 198.

It belongs to the metallo-beta-lactamase superfamily. Glyoxalase II family.

This chain is Beta-lactamase-like protein 2 homolog, found in Drosophila melanogaster (Fruit fly).